Here is a 178-residue protein sequence, read N- to C-terminus: Cytochrome b6-f complex iron-sulfur subunit 1 (178 aa).

The helical transmembrane segment at 17 to 36 (LLNFLAGTTVAVTASAGAYA) threads the bilayer. One can recognise a Rieske domain in the interval 61 to 161 (GNPIPASQIL…VAVVDDQIFI (101 aa)). Cys107, His109, Cys125, and His128 together coordinate [2Fe-2S] cluster. Cys112 and Cys127 are disulfide-bonded.

Belongs to the Rieske iron-sulfur protein family. As to quaternary structure, the 4 large subunits of the cytochrome b6-f complex are cytochrome b6, subunit IV (17 kDa polypeptide, PetD), cytochrome f and the Rieske protein, while the 4 small subunits are PetG, PetL, PetM and PetN. The complex functions as a dimer. It depends on [2Fe-2S] cluster as a cofactor.

Its subcellular location is the cellular thylakoid membrane. It carries out the reaction 2 oxidized [plastocyanin] + a plastoquinol + 2 H(+)(in) = 2 reduced [plastocyanin] + a plastoquinone + 4 H(+)(out). Component of the cytochrome b6-f complex, which mediates electron transfer between photosystem II (PSII) and photosystem I (PSI), cyclic electron flow around PSI, and state transitions. The sequence is that of Cytochrome b6-f complex iron-sulfur subunit 1 from Synechocystis sp. (strain ATCC 27184 / PCC 6803 / Kazusa).